Reading from the N-terminus, the 112-residue chain is Nucleoid-associated protein FTH_1374 (112 aa).

The interval 1–27 (MNFDMSKLMQQAQKMQEQMKKAQQERE) is disordered. The segment covering 17–27 (EQMKKAQQERE) has biased composition (basic and acidic residues).

Belongs to the YbaB/EbfC family. As to quaternary structure, homodimer.

Its subcellular location is the cytoplasm. It localises to the nucleoid. Functionally, binds to DNA and alters its conformation. May be involved in regulation of gene expression, nucleoid organization and DNA protection. The polypeptide is Nucleoid-associated protein FTH_1374 (Francisella tularensis subsp. holarctica (strain OSU18)).